The sequence spans 303 residues: UDP-3-O-acyl-N-acetylglucosamine deacetylase (303 aa).

Residues histidine 78, histidine 237, and aspartate 241 each contribute to the Zn(2+) site. The active-site Proton donor is histidine 264.

Belongs to the LpxC family. Zn(2+) is required as a cofactor.

It carries out the reaction a UDP-3-O-[(3R)-3-hydroxyacyl]-N-acetyl-alpha-D-glucosamine + H2O = a UDP-3-O-[(3R)-3-hydroxyacyl]-alpha-D-glucosamine + acetate. Its pathway is glycolipid biosynthesis; lipid IV(A) biosynthesis; lipid IV(A) from (3R)-3-hydroxytetradecanoyl-[acyl-carrier-protein] and UDP-N-acetyl-alpha-D-glucosamine: step 2/6. Its function is as follows. Catalyzes the hydrolysis of UDP-3-O-myristoyl-N-acetylglucosamine to form UDP-3-O-myristoylglucosamine and acetate, the committed step in lipid A biosynthesis. This chain is UDP-3-O-acyl-N-acetylglucosamine deacetylase, found in Teredinibacter turnerae (strain ATCC 39867 / T7901).